We begin with the raw amino-acid sequence, 84 residues long: Small ribosomal subunit protein bS16 (84 aa).

The protein belongs to the bacterial ribosomal protein bS16 family.

The polypeptide is Small ribosomal subunit protein bS16 (Cupriavidus necator (strain ATCC 17699 / DSM 428 / KCTC 22496 / NCIMB 10442 / H16 / Stanier 337) (Ralstonia eutropha)).